The primary structure comprises 361 residues: T-box-containing protein TBX6L (361 aa).

A DNA-binding region (T-box) is located at residues 36-209; the sequence is LWMKFHQIGT…NNPFAKGFRE (174 aa). Disordered stretches follow at residues 203 to 259 and 280 to 323; these read FAKG…VKEE and HAFP…QLPS. Composition is skewed to basic and acidic residues over residues 206 to 220 and 234 to 259; these read GFREHGKNTRREGRA and KLPEEKESGAEERDFEKDENVDVKEE. A compositionally biased stretch (low complexity) spans 280-290; the sequence is HAFPAASPAPA.

Its subcellular location is the nucleus. In terms of biological role, may be involved in regulating somitogenesis. This is T-box-containing protein TBX6L (TBX6L) from Gallus gallus (Chicken).